The following is a 118-amino-acid chain: Ribonuclease P protein component (118 aa).

Belongs to the RnpA family. Consists of a catalytic RNA component (M1 or rnpB) and a protein subunit.

It catalyses the reaction Endonucleolytic cleavage of RNA, removing 5'-extranucleotides from tRNA precursor.. Its function is as follows. RNaseP catalyzes the removal of the 5'-leader sequence from pre-tRNA to produce the mature 5'-terminus. It can also cleave other RNA substrates such as 4.5S RNA. The protein component plays an auxiliary but essential role in vivo by binding to the 5'-leader sequence and broadening the substrate specificity of the ribozyme. This is Ribonuclease P protein component from Vibrio campbellii (strain ATCC BAA-1116).